The chain runs to 111 residues: Cryptic phage CTXphi transcriptional repressor RstR (111 aa).

One can recognise an HTH cro/C1-type domain in the interval 6-60; that stretch reads IRDLRVERDLNQEEVANGIGVGKNTYLAYEKGTQSPKLETVEKLAKFYGVPIAEL. A DNA-binding region (H-T-H motif) is located at residues 17 to 36; sequence QEEVANGIGVGKNTYLAYEK.

Functionally, transcriptional repressor of the integrated CTXPhi phage gene rstA2. The polypeptide is Cryptic phage CTXphi transcriptional repressor RstR (rstR) (Vibrio cholerae).